Here is a 160-residue protein sequence, read N- to C-terminus: Large ribosomal subunit protein eL21A (160 aa).

A disordered region spans residues 114–138 (AKRKEAKAQGKTVQLRRQPAPPAKA).

It belongs to the eukaryotic ribosomal protein eL21 family. In terms of assembly, component of the large ribosomal subunit (LSU). Mature yeast ribosomes consist of a small (40S) and a large (60S) subunit. The 40S small subunit contains 1 molecule of ribosomal RNA (18S rRNA) and at least 33 different proteins. The large 60S subunit contains 3 rRNA molecules (25S, 5.8S and 5S rRNA) and at least 46 different proteins.

It is found in the cytoplasm. Functionally, component of the ribosome, a large ribonucleoprotein complex responsible for the synthesis of proteins in the cell. The small ribosomal subunit (SSU) binds messenger RNAs (mRNAs) and translates the encoded message by selecting cognate aminoacyl-transfer RNA (tRNA) molecules. The large subunit (LSU) contains the ribosomal catalytic site termed the peptidyl transferase center (PTC), which catalyzes the formation of peptide bonds, thereby polymerizing the amino acids delivered by tRNAs into a polypeptide chain. The nascent polypeptides leave the ribosome through a tunnel in the LSU and interact with protein factors that function in enzymatic processing, targeting, and the membrane insertion of nascent chains at the exit of the ribosomal tunnel. This Schizosaccharomyces pombe (strain 972 / ATCC 24843) (Fission yeast) protein is Large ribosomal subunit protein eL21A (rpl2101).